The sequence spans 248 residues: 4-hydroxy-tetrahydrodipicolinate reductase (248 aa).

NAD(+) is bound by residues 74–76 (GTT) and 99–102 (SANF). The active-site Proton donor/acceptor is the His-134. Position 135 (His-135) interacts with (S)-2,3,4,5-tetrahydrodipicolinate. Catalysis depends on Lys-138, which acts as the Proton donor. 144-145 (GT) is a binding site for (S)-2,3,4,5-tetrahydrodipicolinate.

The protein belongs to the DapB family.

The protein resides in the cytoplasm. It carries out the reaction (S)-2,3,4,5-tetrahydrodipicolinate + NAD(+) + H2O = (2S,4S)-4-hydroxy-2,3,4,5-tetrahydrodipicolinate + NADH + H(+). The catalysed reaction is (S)-2,3,4,5-tetrahydrodipicolinate + NADP(+) + H2O = (2S,4S)-4-hydroxy-2,3,4,5-tetrahydrodipicolinate + NADPH + H(+). It functions in the pathway amino-acid biosynthesis; L-lysine biosynthesis via DAP pathway; (S)-tetrahydrodipicolinate from L-aspartate: step 4/4. Functionally, catalyzes the conversion of 4-hydroxy-tetrahydrodipicolinate (HTPA) to tetrahydrodipicolinate. The chain is 4-hydroxy-tetrahydrodipicolinate reductase from Chlorobium phaeobacteroides (strain BS1).